A 93-amino-acid polypeptide reads, in one-letter code: Cell division protein CrgA (93 aa).

The next 2 helical transmembrane spans lie at V31–F51 and L70–M90.

It belongs to the CrgA family.

The protein resides in the cell membrane. Its function is as follows. Involved in cell division. The polypeptide is Cell division protein CrgA (Mycobacterium avium (strain 104)).